The following is a 461-amino-acid chain: Photosystem II CP43 reaction center protein (461 aa).

The propeptide occupies 1–2 (ME). Threonine 3 carries the post-translational modification N-acetylthreonine. Threonine 3 carries the post-translational modification Phosphothreonine. Transmembrane regions (helical) follow at residues 57–81 (LFEVAHFVPEKPMYEQGLILLPHLA), 122–143 (LLGPETLEESFPFFGYVWKDRN), 166–188 (KALYFGGVYDTWAPGGGDVRKIT), 243–263 (KPFAWARRALVWSGEAYLSYS), and 279–300 (WFNNTAYPSEFYGPTGPEASQA). Residue glutamate 355 participates in [CaMn4O5] cluster binding. The chain crosses the membrane as a helical span at residues 435 to 459 (RARAAAAGFEKGIDRDFEPVLSMTP).

This sequence belongs to the PsbB/PsbC family. PsbC subfamily. PSII is composed of 1 copy each of membrane proteins PsbA, PsbB, PsbC, PsbD, PsbE, PsbF, PsbH, PsbI, PsbJ, PsbK, PsbL, PsbM, PsbT, PsbX, PsbY, PsbZ, Psb30/Ycf12, at least 3 peripheral proteins of the oxygen-evolving complex and a large number of cofactors. It forms dimeric complexes. Requires Binds multiple chlorophylls and provides some of the ligands for the Ca-4Mn-5O cluster of the oxygen-evolving complex. It may also provide a ligand for a Cl- that is required for oxygen evolution. PSII binds additional chlorophylls, carotenoids and specific lipids. as cofactor.

It is found in the plastid. It localises to the chloroplast thylakoid membrane. In terms of biological role, one of the components of the core complex of photosystem II (PSII). It binds chlorophyll and helps catalyze the primary light-induced photochemical processes of PSII. PSII is a light-driven water:plastoquinone oxidoreductase, using light energy to abstract electrons from H(2)O, generating O(2) and a proton gradient subsequently used for ATP formation. In Nicotiana sylvestris (Wood tobacco), this protein is Photosystem II CP43 reaction center protein.